The chain runs to 433 residues: O-methyltransferase aclM (433 aa).

Positions 5-37 (LTDAERTALQTSLEALNRQVEATRNILRSNSQK) form a coiled coil. Residues Asp277 and 311-313 (GDF) each bind S-adenosyl-L-methionine. His330 (proton acceptor) is an active-site residue.

Belongs to the class I-like SAM-binding methyltransferase superfamily. Cation-independent O-methyltransferase family. COMT subfamily.

The protein operates within mycotoxin biosynthesis. O-methyltransferase; part of the gene cluster that mediates the biosynthesis of aspirochlorine (or antibiotic A30641), an unusual halogenated spiro compound with distinctive antifungal properties due to selective inhibition of protein biosynthesis, and which is also active against bacteria, viruses, and murine tumor cells. The non-ribosomal peptide synthetase (NRPS) aclP is responsible the formation of the diketopiperazine (DKP) core from the condensation of 2 phenylalanine residues. One Phe residue is tailored into chlorotyrosine by hydroxylation and chlorination, whereas the second Phe undergoes an unprecedented C-C bond cleavage to be converted into glycine. After formation of the DKP, sulfur is incorporated into the DKP by conjugation with glutathione by aclG, followed by its stepwise degradation to the thiol by aclI, aclJ and aclK, and the dithiol oxidation by aclT. In addition, oxygenases (aclB, aclC, aclL and aclO) and O-methyltransferases (aclM and aclU) act as tailoring enzymes to produce the intermediate dechloroaspirochlorine. Ultimately, chlorination of dechloroaspirochlorine by the halogenase aclH is the last step in the aspirochlorine pathway. The polypeptide is O-methyltransferase aclM (Aspergillus oryzae (strain ATCC 42149 / RIB 40) (Yellow koji mold)).